A 319-amino-acid chain; its full sequence is MTVSTTPKSQRNVARGVWELARLHTREAWLCWYPAIWGACVAAGMRDVSLELAPFLRLLFGIWASVTATHCAFCTFNDICDQKLDKHVERCKIRPLPSGMISTSEAVVAFICWLPVTLAITWGTLGPAVMAGFIPVWVLSTIYPFMKRIMPFPQVVLGAIIGGAVFPGWVGITGDLKDLDQALPLFFATASWVVYFDVFYATQDRPDDEKIGVKSLAVLLGKNVQILLAVLGALQVLLFAVTALRADMSLIFWVLGLGVWMVNVPWHILSLDLKDRHSGGRIFKSNIKLGLYLTGVSLLELFVVRVYDISLANMKMELH.

9 helical membrane passes run 28-45 (AWLC…AAGM), 48-68 (VSLE…SVTA), 106-126 (AVVA…GTLG), 127-147 (PAVM…PFMK), 152-172 (FPQV…WVGI), 182-202 (ALPL…FYAT), 224-244 (VQIL…VTAL), 249-269 (SLIF…WHIL), and 289-309 (LGLY…VYDI).

It belongs to the UbiA prenyltransferase family. It depends on Mg(2+) as a cofactor.

It is found in the membrane. It functions in the pathway secondary metabolite biosynthesis; terpenoid biosynthesis. Functionally, polyprenyl transferase; part of the gene cluster that mediates the biosynthesis of macrophorins, isoprenoid epoxycyclohexenones containing cyclized drimane moieties. The first step of the pathway is the synthesis of 6-methylsalicylic acid (6-MSA) by the polyketide synthase macA. 6-MSA is then converted to m-cresol by the decarboxylase macB. The cytochrome P450 monooxygenase macC then catalyzes the oxidation of m-cresol to toluquinol. Epoxidation of toluquinol is then performed by the short chain dehydrogenase macD, with the help of macE, and a further prenylation by macG leads to 7-deacetoxyyanuthone A. The next step is the hydroxylation of C-22 of 7-deacetoxyyanuthone A by the cytochrome P450 monooxygenase macH to yield 22-deacetylyanuthone A. O-Mevalon transferase macI then attaches mevalon to the hydroxyl group of 22-deacetylyanuthone A to produce yanuthone E. The terpene cyclase macJ catalyzes the cyclization of 22-deacetylyanuthone A to macrophorin A. MacJ is also able to catalyze cyclization of yanuthone E and 7-deacetoxyyanuthone A to their corresponding macrophorins. The macJ products can be further modified by macH and macJ, as well as by the FAD-dependent monooxygenase macF, to produce additional macrophorins, including 4'-oxomacrophorin A, 4'-oxomacrophorin D and 4'-oxomacrophorin E. This chain is Polyprenyl transferase macG, found in Penicillium terrestre.